Here is a 577-residue protein sequence, read N- to C-terminus: DEAD-box ATP-dependent RNA helicase 22 (577 aa).

The Q motif signature appears at 82 to 110 (TSWESLGVSDRLASALHGAGLARPSLVQA). Residues 113–375 (IPHVLTTNDV…GGVLKRMFPN (263 aa)) enclose the Helicase ATP-binding domain. An ATP-binding site is contributed by 126-133 (AETGSGKT). The DEAD box motif lies at 249-252 (DEAD). Positions 288–317 (SLGDTNEYREDSDSQSAELSADDEENEDGL) are disordered. In terms of domain architecture, Helicase C-terminal spans 407–568 (LLDAVKYGLK…SFRNKLKKQA (162 aa)).

It belongs to the DEAD box helicase family.

The enzyme catalyses ATP + H2O = ADP + phosphate + H(+). This chain is DEAD-box ATP-dependent RNA helicase 22, found in Oryza sativa subsp. japonica (Rice).